A 334-amino-acid polypeptide reads, in one-letter code: Ketol-acid reductoisomerase (NADP(+)) (334 aa).

The region spanning 1–181 (MTTVYYDQDV…GATRAGVIET (181 aa)) is the KARI N-terminal Rossmann domain. NADP(+)-binding positions include 25 to 28 (YGSQ), R48, S52, and 82 to 85 (DEIQ). Residue H107 is part of the active site. G133 contacts NADP(+). A KARI C-terminal knotted domain is found at 182-327 (TFKEETETDL…RELREMMPFI (146 aa)). Residues D190, E194, E226, and E230 each contribute to the Mg(2+) site. Residue S251 coordinates substrate.

It belongs to the ketol-acid reductoisomerase family. Mg(2+) is required as a cofactor.

It catalyses the reaction (2R)-2,3-dihydroxy-3-methylbutanoate + NADP(+) = (2S)-2-acetolactate + NADPH + H(+). The enzyme catalyses (2R,3R)-2,3-dihydroxy-3-methylpentanoate + NADP(+) = (S)-2-ethyl-2-hydroxy-3-oxobutanoate + NADPH + H(+). It functions in the pathway amino-acid biosynthesis; L-isoleucine biosynthesis; L-isoleucine from 2-oxobutanoate: step 2/4. The protein operates within amino-acid biosynthesis; L-valine biosynthesis; L-valine from pyruvate: step 2/4. Involved in the biosynthesis of branched-chain amino acids (BCAA). Catalyzes an alkyl-migration followed by a ketol-acid reduction of (S)-2-acetolactate (S2AL) to yield (R)-2,3-dihydroxy-isovalerate. In the isomerase reaction, S2AL is rearranged via a Mg-dependent methyl migration to produce 3-hydroxy-3-methyl-2-ketobutyrate (HMKB). In the reductase reaction, this 2-ketoacid undergoes a metal-dependent reduction by NADPH to yield (R)-2,3-dihydroxy-isovalerate. The chain is Ketol-acid reductoisomerase (NADP(+)) from Staphylococcus aureus (strain Mu3 / ATCC 700698).